The following is a 21-amino-acid chain: Antimicrobial peptide scolopin-1 (21 aa).

In terms of tissue distribution, expressed by the venom gland.

The protein resides in the secreted. In terms of biological role, antimicrobial peptide against both Gram-positive, -negative and yeast. Also induces histamine release by mast cells and shows moderate hemolytic activities against both human and rabbit red cells. The protein is Antimicrobial peptide scolopin-1 of Scolopendra mutilans (Chinese red-headed centipede).